Reading from the N-terminus, the 382-residue chain is DNA double-strand break repair protein Mre11 (382 aa).

Positions 8, 10, 49, and 84 each coordinate Mn(2+). Residue His85 is the Proton donor of the active site. 3 residues coordinate Mn(2+): His156, His187, and His189.

The protein belongs to the MRE11/RAD32 family. In terms of assembly, homodimer. Forms a heterotetramer composed of two Mre11 subunits and two Rad50 subunits. Interacts with Rad50 and HerA. Mn(2+) is required as a cofactor.

Its activity is regulated as follows. Nuclease activity is regulated by Rad50. Part of the Rad50/Mre11 complex, which is involved in the early steps of DNA double-strand break (DSB) repair. The complex may facilitate opening of the processed DNA ends to aid in the recruitment of HerA and NurA. Mre11 binds to DSB ends and has both double-stranded 3'-5' exonuclease activity and single-stranded endonuclease activity. Recruited immediately to chromosomal DNA after gamma irradiation, and remains DNA bound in the course of DNA repair. This is DNA double-strand break repair protein Mre11 from Sulfolobus acidocaldarius (strain ATCC 33909 / DSM 639 / JCM 8929 / NBRC 15157 / NCIMB 11770).